A 238-amino-acid chain; its full sequence is Deoxyribose-phosphate aldolase (238 aa).

The active-site Proton donor/acceptor is the Asp104. Catalysis depends on Lys168, which acts as the Schiff-base intermediate with acetaldehyde. Residue Lys197 is the Proton donor/acceptor of the active site.

The protein belongs to the DeoC/FbaB aldolase family. DeoC type 1 subfamily.

The protein resides in the cytoplasm. It catalyses the reaction 2-deoxy-D-ribose 5-phosphate = D-glyceraldehyde 3-phosphate + acetaldehyde. The protein operates within carbohydrate degradation; 2-deoxy-D-ribose 1-phosphate degradation; D-glyceraldehyde 3-phosphate and acetaldehyde from 2-deoxy-alpha-D-ribose 1-phosphate: step 2/2. Its function is as follows. Catalyzes a reversible aldol reaction between acetaldehyde and D-glyceraldehyde 3-phosphate to generate 2-deoxy-D-ribose 5-phosphate. This is Deoxyribose-phosphate aldolase from Bacteroides thetaiotaomicron (strain ATCC 29148 / DSM 2079 / JCM 5827 / CCUG 10774 / NCTC 10582 / VPI-5482 / E50).